Consider the following 878-residue polypeptide: Pyruvate dehydrogenase phosphatase regulatory subunit, mitochondrial (878 aa).

The N-terminal 26 residues, 1-26, are a transit peptide targeting the mitochondrion; sequence MLPRLLAVVRGPGSCRGWREGSPARG.

Belongs to the GcvT family. Heterodimer of a catalytic (PDP1) and a regulatory (PDPR) subunit.

The protein localises to the mitochondrion matrix. Decreases the sensitivity of PDP1 to magnesium ions, and this inhibition is reversed by the polyamine spermine. The sequence is that of Pyruvate dehydrogenase phosphatase regulatory subunit, mitochondrial (PDPR) from Bos taurus (Bovine).